The sequence spans 965 residues: Phosphoenolpyruvate carboxylase 1 (965 aa).

Phosphoserine is present on S11. H172 is an active-site residue. Positions 283, 450, and 597 each coordinate D-glucose 6-phosphate. K600 is an active-site residue. R635 provides a ligand contact to D-glucose 6-phosphate. The active site involves R641. R641 serves as a coordination point for L-aspartate. T665 contributes to the D-glucose 6-phosphate binding site. An L-aspartate-binding site is contributed by Q673. D-glucose 6-phosphate contacts are provided by residues R753 and 767–769; that span reads RAI. L-aspartate contacts are provided by K829, R888, and N963.

It belongs to the PEPCase type 1 family. As to quaternary structure, homotetramer. Requires Mg(2+) as cofactor. As to expression, expressed in roots and stems and at low levels in leaves. Preferentially expressed in the phloem and in root tips.

It localises to the cytoplasm. The enzyme catalyses oxaloacetate + phosphate = phosphoenolpyruvate + hydrogencarbonate. Its activity is regulated as follows. Activated by the allosteric regulator glucose-6-phosphate. Inhibited by malate and aspartate. Up regulated by light-reversible phosphorylation. Its function is as follows. Through the carboxylation of phosphoenolpyruvate (PEP) it forms oxaloacetate, a four-carbon dicarboxylic acid source for the tricarboxylic acid cycle. May be involved in phloem loading with sucrose and in anions and cations uptake and amino acid biosynthesis in roots. This is Phosphoenolpyruvate carboxylase 1 from Flaveria trinervia (Clustered yellowtops).